The sequence spans 305 residues: tRNA dimethylallyltransferase 1 (305 aa).

Position 10-17 (10-17) interacts with ATP; the sequence is GPTASGKT. 12-17 is a binding site for substrate; it reads TASGKT. Residues 35 to 38 are interaction with substrate tRNA; the sequence is DSRQ.

The protein belongs to the IPP transferase family. Monomer. Requires Mg(2+) as cofactor.

The catalysed reaction is adenosine(37) in tRNA + dimethylallyl diphosphate = N(6)-dimethylallyladenosine(37) in tRNA + diphosphate. Functionally, catalyzes the transfer of a dimethylallyl group onto the adenine at position 37 in tRNAs that read codons beginning with uridine, leading to the formation of N6-(dimethylallyl)adenosine (i(6)A). The sequence is that of tRNA dimethylallyltransferase 1 from Syntrophus aciditrophicus (strain SB).